The chain runs to 241 residues: Chaperone protein FimC (241 aa).

The N-terminal stretch at 1-36 is a signal peptide; sequence MSNKNVNVRKSQEITFCLLAGILMFMAMMVAGRAEA.

The protein belongs to the periplasmic pilus chaperone family.

It localises to the periplasm. Functionally, required for the biogenesis of type 1 fimbriae. Binds and interact with FimH. The sequence is that of Chaperone protein FimC (fimC) from Escherichia coli (strain K12).